Here is an 87-residue protein sequence, read N- to C-terminus: Stannin (87 aa).

At 1–10 (MSIMDHSPTT) the chain is on the mitochondrial intermembrane side. The helical transmembrane segment at 11-31 (GVVTVIVILIAIAALGALILG) threads the bilayer. Residues 32-87 (CWCYLRLQRISQSEDEESIVGDGETKEPFLLVQYSAKGPCVERKAKLTPNGPEVHS) lie on the Cytoplasmic side of the membrane. Phosphoserine is present on Ser-49.

The protein belongs to the stannin family. In terms of assembly, monomer.

Its subcellular location is the mitochondrion outer membrane. Its function is as follows. Plays a role in the toxic effects of organotins. Plays a role in endosomal maturation. The sequence is that of Stannin (SNN) from Bos taurus (Bovine).